The sequence spans 537 residues: Putative cysteine ligase BshC (537 aa).

Positions 422-450 form a coiled coil; that stretch reads IEKVEGMIEQQRRLNKDLLDEVAGNQNNI.

This sequence belongs to the BshC family.

Its function is as follows. Involved in bacillithiol (BSH) biosynthesis. May catalyze the last step of the pathway, the addition of cysteine to glucosamine malate (GlcN-Mal) to generate BSH. The chain is Putative cysteine ligase BshC from Staphylococcus aureus (strain Mu3 / ATCC 700698).